Here is a 236-residue protein sequence, read N- to C-terminus: uncharacterized protein (236 aa).

This is an uncharacterized protein from Ureaplasma parvum serovar 3 (strain ATCC 700970).